The primary structure comprises 236 residues: Transcriptional activator protein SolR (236 aa).

In terms of domain architecture, HTH luxR-type spans 169–234; that stretch reads VPESNAVLTT…QAVVKAIATG (66 aa). Positions 193–212 form a DNA-binding region, H-T-H motif; sequence AYEIGQILRISERTVNFHVN.

Belongs to the autoinducer-regulated transcriptional regulatory protein family.

The polypeptide is Transcriptional activator protein SolR (solR) (Ralstonia solanacearum (Pseudomonas solanacearum)).